We begin with the raw amino-acid sequence, 108 residues long: Thiosulfate sulfurtransferase GlpE (108 aa).

The 89-residue stretch at 17-105 (HQGAAVLVDI…WHRHFPADVA (89 aa)) folds into the Rhodanese domain. Cys-65 (cysteine persulfide intermediate) is an active-site residue.

It belongs to the GlpE family.

The protein localises to the cytoplasm. It carries out the reaction thiosulfate + hydrogen cyanide = thiocyanate + sulfite + 2 H(+). The catalysed reaction is thiosulfate + [thioredoxin]-dithiol = [thioredoxin]-disulfide + hydrogen sulfide + sulfite + 2 H(+). Functionally, transferase that catalyzes the transfer of sulfur from thiosulfate to thiophilic acceptors such as cyanide or dithiols. May function in a CysM-independent thiosulfate assimilation pathway by catalyzing the conversion of thiosulfate to sulfite, which can then be used for L-cysteine biosynthesis. The chain is Thiosulfate sulfurtransferase GlpE from Salmonella arizonae (strain ATCC BAA-731 / CDC346-86 / RSK2980).